The sequence spans 189 residues: FUN14 domain-containing protein 2 (189 aa).

Residues 1–80 lie on the Cytoplasmic side of the membrane; that stretch reads METSAPRAGS…GQESGPSAEK (80 aa). 2 positions are modified to phosphoserine: S10 and S53. The chain crosses the membrane as a helical span at residues 81–101; it reads YSVATQLFIGGVTGWCTGFIF. The Mitochondrial intermembrane portion of the chain corresponds to 102–107; it reads QNVGKL. Residues 108 to 128 traverse the membrane as a helical segment; sequence AATAVGGGFFLLQLANHTGYI. At 129 to 164 the chain is on the cytoplasmic side; that stretch reads KVDWQRVEKDMKKAKEQLKIRKSNQMPTEVRSKAEE. The residue at position 151 (S151) is a Phosphoserine. A helical transmembrane segment spans residues 165–185; that stretch reads VVSFVKKNVLVTGGFFGGFLL. The Mitochondrial intermembrane portion of the chain corresponds to 186 to 189; the sequence is GMAS.

The protein belongs to the FUN14 family.

Its subcellular location is the mitochondrion outer membrane. It localises to the nucleus. Its function is as follows. Binds directly and specifically 1,2-Diacyl-sn-glycero-3-phospho-(1'-myo-inositol-3',4',5'-bisphosphate) (PIP3) leading to the recruitment of PIP3 to mitochondria and may play a role in the regulation of the platelet activation via AKT/GSK3B/cGMP signaling pathways. May act as transcription factor that regulates SREBP1 (isoform SREBP-1C) expression in order to modulate triglyceride (TG) homeostasis in hepatocytes. The sequence is that of FUN14 domain-containing protein 2 from Macaca mulatta (Rhesus macaque).